The sequence spans 559 residues: Pentatricopeptide repeat-containing protein At2g42920, chloroplastic (559 aa).

The transit peptide at 1 to 14 (MSPTILSFSGVTVP) directs the protein to the chloroplast. 10 PPR repeats span residues 88–122 (NPFV…SPSV), 125–159 (QRLT…GLED), 160–190 (DSFI…MIGF), 191–221 (DVVA…MPQR), 222–256 (NGVS…DVKP), 257–291 (DGFT…RFEL), 292–322 (NSIV…APKK), 323–357 (QLSC…GLEP), 358–388 (DSVS…MKEK), and 394–424 (SIKH…MPVE). The type E motif stretch occupies residues 429–504 (IWSSLLSACR…EVGCSSIEVD (76 aa)). Residues 505 to 535 (FEVHEFISCGGTHPKSAEIYSLLDILNWDVS) are type E(+) motif.

This sequence belongs to the PPR family. PCMP-E subfamily.

It is found in the plastid. The protein localises to the chloroplast. In Arabidopsis thaliana (Mouse-ear cress), this protein is Pentatricopeptide repeat-containing protein At2g42920, chloroplastic (PCMP-E75).